A 105-amino-acid chain; its full sequence is Large ribosomal subunit protein bL21 (105 aa).

This sequence belongs to the bacterial ribosomal protein bL21 family. Part of the 50S ribosomal subunit. Contacts protein L20.

In terms of biological role, this protein binds to 23S rRNA in the presence of protein L20. The sequence is that of Large ribosomal subunit protein bL21 from Rhizobium johnstonii (strain DSM 114642 / LMG 32736 / 3841) (Rhizobium leguminosarum bv. viciae).